A 271-amino-acid polypeptide reads, in one-letter code: Probable iron transport system membrane protein HI_0359 (271 aa).

A run of 8 helical transmembrane segments spans residues 17–37, 55–75, 93–113, 131–151, 168–188, 194–214, 221–241, and 245–265; these read ALLTALIVSIICALLSCYLVL, IVLAYLAGIPLAIGAFFSGIF, TAMGIVFSGMFAIGLVMFTKI, SHQELIQSAVISAIIFCLIVF, VAGLSPKILHYGLLILLALTI, VVGVILVVAMLIAPGITALTL, MLWVAIASSIASSLIGVILSY, and ASTGACIILLQAAFFVIALAY.

Belongs to the ABC-3 integral membrane protein family.

It localises to the cell inner membrane. In terms of biological role, part of an ATP-driven transport system HI_0359/HI_0360/HI_0361/HI_0362 for iron. The polypeptide is Probable iron transport system membrane protein HI_0359 (Haemophilus influenzae (strain ATCC 51907 / DSM 11121 / KW20 / Rd)).